Consider the following 389-residue polypeptide: Krueppel-like factor 17 (389 aa).

Disordered stretches follow at residues 1–48 and 239–279; these read MYGR…SGVH and LVSQ…GSSE. The segment covering 26-38 has biased composition (polar residues); the sequence is AQDNENSAPILNM. Positions 264-278 are enriched in basic and acidic residues; the sequence is KNSRPQEGTGRRGSS. C2H2-type zinc fingers lie at residues 283 to 307, 313 to 337, and 343 to 365; these read YCCNYENCGKAYTKRSHLVSHQRKH, YSCNWESCSWSFFRSDELRRHMRVH, and YKCDQCSREFMRSDHLKQHQKTH. The segment at 356–389 is disordered; sequence DHLKQHQKTHRPGPSDPQANNNNGEQDSPPAAGP. Positions 372–381 are enriched in polar residues; sequence PQANNNNGEQ.

Belongs to the Sp1 C2H2-type zinc-finger protein family.

The protein resides in the nucleus. Functionally, transcription repressor that binds to the promoter of target genes and prevents their expression. Acts as a negative regulator of epithelial-mesenchymal transition and metastasis in breast cancer. Specifically binds the 5'-CACCC-3' sequence in the promoter of ID1, a key metastasis regulator in breast cancer, and repress its expression. May be a germ cell-specific transcription factor that plays important roles in spermatid differentiation and oocyte development. This is Krueppel-like factor 17 (KLF17) from Homo sapiens (Human).